The chain runs to 284 residues: 3-methyl-2-oxobutanoate hydroxymethyltransferase 2 (284 aa).

Mg(2+) is bound by residues D49 and D88. 3-methyl-2-oxobutanoate contacts are provided by residues 49-50 (DS), D88, and K118. E120 is a Mg(2+) binding site. E187 functions as the Proton acceptor in the catalytic mechanism.

The protein belongs to the PanB family. As to quaternary structure, homodecamer; pentamer of dimers. Requires Mg(2+) as cofactor.

The protein localises to the cytoplasm. The enzyme catalyses 3-methyl-2-oxobutanoate + (6R)-5,10-methylene-5,6,7,8-tetrahydrofolate + H2O = 2-dehydropantoate + (6S)-5,6,7,8-tetrahydrofolate. Its pathway is cofactor biosynthesis; (R)-pantothenate biosynthesis; (R)-pantoate from 3-methyl-2-oxobutanoate: step 1/2. Catalyzes the reversible reaction in which hydroxymethyl group from 5,10-methylenetetrahydrofolate is transferred onto alpha-ketoisovalerate to form ketopantoate. The protein is 3-methyl-2-oxobutanoate hydroxymethyltransferase 2 of Burkholderia ambifaria (strain ATCC BAA-244 / DSM 16087 / CCUG 44356 / LMG 19182 / AMMD) (Burkholderia cepacia (strain AMMD)).